The sequence spans 78 residues: MQTAYWVMVMVMVWITAPLSEGGKPNDVIRGLVPDDLTPQLILRSLISRRRSDKDVGKRMECYWKSCSRPLSRRHDLG.

The N-terminal stretch at 1–22 (MQTAYWVMVMVMVWITAPLSEG) is a signal peptide. The propeptide occupies 23-59 (GKPNDVIRGLVPDDLTPQLILRSLISRRRSDKDVGKR). 4-carboxyglutamate is present on Glu61. The cysteines at positions 62 and 67 are disulfide-linked. Trp64 is modified (D-tryptophan). 4-hydroxyproline is present on Pro70. The propeptide occupies 71 to 78 (LSRRHDLG).

This sequence belongs to the conotoxin C superfamily. Consomatin family. In terms of tissue distribution, expressed by the venom duct.

It is found in the secreted. Its function is as follows. Moderately activates human somatostatin receptors (SSTR) with a preferential activation of SSTR1 and SSTR4. In vivo, does not cause behavioral changes in mice within a few minutes of intracranial injection, but causes a progressive loss of movement thereafter. Four to five hours after injection, mice recover, even with the highest dose tested. Shows antinociception and antihyperalgesia activities in two mouse models of acute pain, most probably by acting outside the central nervous system. The sequence is that of Consomatin Nc1 from Conus neocostatus (Cone snail).